Here is a 144-residue protein sequence, read N- to C-terminus: Putative pre-16S rRNA nuclease (144 aa).

It belongs to the YqgF nuclease family.

Its subcellular location is the cytoplasm. Functionally, could be a nuclease involved in processing of the 5'-end of pre-16S rRNA. This is Putative pre-16S rRNA nuclease from Lacticaseibacillus casei (strain BL23) (Lactobacillus casei).